Here is a 230-residue protein sequence, read N- to C-terminus: Ropporin-1-like protein (230 aa).

An RIIa domain is found at 17–46; that stretch reads PELPDILKQFTKAAIRTQPADVLRWSAGYF.

The protein belongs to the ropporin family. In terms of assembly, component of the axonemal radial spoke complex 1 (RS1), at least composed of spoke head proteins RSPH1, RSPH3, RSPH9 and the cilia-specific component RSPH4A or sperm-specific component RSPH6A, spoke stalk proteins RSPH14, DNAJB13, DYDC1, ROPN1L and NME5, and the anchor protein IQUB. Interacts with FSCB; the interaction increases upon spermatozoa capacitation conditions. May interact with AKAP3. Interacts with CFAP61. In terms of processing, sumoylated, sumoylation decreases upon spermatozoa capacitation conditions.

Its subcellular location is the cell projection. The protein localises to the cilium. It is found in the flagellum. Its function is as follows. Functions as part of axonemal radial spoke complexes that play an important part in the motility of sperm and cilia. Important for male fertility. With ROPN1, involved in fibrous sheath integrity and sperm motility, plays a role in PKA-dependent signaling processes required for spermatozoa capacitation. The chain is Ropporin-1-like protein (ROPN1L) from Homo sapiens (Human).